The chain runs to 171 residues: Skp-like protein (171 aa).

Positions methionine 1–alanine 21 are cleaved as a signal peptide.

Belongs to the Skp family.

The polypeptide is Skp-like protein (Chlamydia pneumoniae (Chlamydophila pneumoniae)).